We begin with the raw amino-acid sequence, 354 residues long: NADH-quinone oxidoreductase subunit H (354 aa).

Helical transmembrane passes span 22 to 42 (ILIR…YLIL), 91 to 111 (YLIA…VIPF), 124 to 144 (LLYV…AGWA), 168 to 188 (MGFA…SAIV), 203 to 223 (ILSW…ISGV), 255 to 275 (LFFL…ALMF), 291 to 311 (IPGF…FIWI), and 326 to 346 (LGWK…AIWI).

The protein belongs to the complex I subunit 1 family. In terms of assembly, NDH-1 is composed of 14 different subunits. Subunits NuoA, H, J, K, L, M, N constitute the membrane sector of the complex.

The protein localises to the cell inner membrane. It catalyses the reaction a quinone + NADH + 5 H(+)(in) = a quinol + NAD(+) + 4 H(+)(out). NDH-1 shuttles electrons from NADH, via FMN and iron-sulfur (Fe-S) centers, to quinones in the respiratory chain. The immediate electron acceptor for the enzyme in this species is believed to be ubiquinone. Couples the redox reaction to proton translocation (for every two electrons transferred, four hydrogen ions are translocated across the cytoplasmic membrane), and thus conserves the redox energy in a proton gradient. This subunit may bind ubiquinone. This Cupriavidus necator (strain ATCC 17699 / DSM 428 / KCTC 22496 / NCIMB 10442 / H16 / Stanier 337) (Ralstonia eutropha) protein is NADH-quinone oxidoreductase subunit H.